Reading from the N-terminus, the 381-residue chain is Ceropsin (381 aa).

At 1 to 62 the chain is on the extracellular side; the sequence is MSISMDAGPG…MNPLWHALLG (62 aa). Residue asparagine 28 is glycosylated (N-linked (GlcNAc...) asparagine). A helical membrane pass occupies residues 63–83; it reads FTIGVLGFISMMGNGMVIYIF. Residues 84–96 lie on the Cytoplasmic side of the membrane; it reads MTTKNLKTPSNLL. The chain crosses the membrane as a helical span at residues 97 to 117; that stretch reads VVNLAFSDFLMMCAMSPAMVI. The Extracellular portion of the chain corresponds to 118–133; sequence NCYNETWVFGPFACEL. The N-linked (GlcNAc...) asparagine glycan is linked to asparagine 121. A disulfide bridge links cysteine 131 with cysteine 208. A helical membrane pass occupies residues 134–154; that stretch reads YGCAGSLFGCASIWTMTMIAF. The Cytoplasmic segment spans residues 155–173; that stretch reads DRYNVIVKGIAAKPMTNNG. The chain crosses the membrane as a helical span at residues 174–194; the sequence is ALLRILGIWAFSLAWTVAPFF. Topologically, residues 195-221 are extracellular; that stretch reads GWNRYVPEGNMTACGTDYLTKDWFSRS. N-linked (GlcNAc...) asparagine glycosylation occurs at asparagine 204. The chain crosses the membrane as a helical span at residues 222-242; that stretch reads YIVVYSVFVYFAPLLLIVYSY. The Cytoplasmic portion of the chain corresponds to 243 to 284; sequence YYIVQAVSAHEKAMREQAKKMNVASLRSSEAANTSTECKLAK. A helical transmembrane segment spans residues 285–305; sequence VALMTISLWFMAWTPYLVINY. The Extracellular segment spans residues 306 to 316; the sequence is TGILESAPISP. A helical transmembrane segment spans residues 317–339; the sequence is LATIWGSLFAKANAVYNPIVYGI. Residues 340–381 lie on the Cytoplasmic side of the membrane; it reads SHPKYQAALYKRFPVLQCHSTTTDEASSVASGTTVMEEKPTA.

It belongs to the G-protein coupled receptor 1 family. Opsin subfamily. Expressed bilaterally in dorsal and ventral anterior protocerebral cells and bilaterally in the dorsal posterior protocerebral and lateral posterior tritocerebral cells (at protein level). Expressed in the larval brain but not in the subesophageal ganglion or thoracic ganglion.

It localises to the membrane. In terms of biological role, visual pigments are the light-absorbing molecules that mediate vision. They consist of an apoprotein, opsin, covalently linked to cis-retinal. May play a role in photoperiodic photoreception. This chain is Ceropsin, found in Bombyx mori (Silk moth).